Reading from the N-terminus, the 105-residue chain is Large ribosomal subunit protein uL24 (105 aa).

It belongs to the universal ribosomal protein uL24 family. In terms of assembly, part of the 50S ribosomal subunit.

Its function is as follows. One of two assembly initiator proteins, it binds directly to the 5'-end of the 23S rRNA, where it nucleates assembly of the 50S subunit. One of the proteins that surrounds the polypeptide exit tunnel on the outside of the subunit. The polypeptide is Large ribosomal subunit protein uL24 (Methylobacterium sp. (strain 4-46)).